The sequence spans 223 residues: Golgi SNAP receptor complex member 1 (223 aa).

Ser-2 bears the N-acetylserine mark. Over 2–204 (SSQPSFVTIR…MKINTRRKKN (203 aa)) the chain is Cytoplasmic. Ser-164 is subject to Phosphoserine. A helical; Anchor for type IV membrane protein transmembrane segment spans residues 205 to 222 (AFVLATITTLCILFLFFT). Position 223 (Trp-223) is a topological domain, vesicular.

This sequence belongs to the GOSR1 family. As to quaternary structure, component of several multiprotein Golgi SNARE complexes. Identified in a Golgi SNARE complex consisting of t-SNARES SED5, YKT6, and the v-SNARE SFT1. Interacts with BET1. Interacts with BOS1. Interacts with SEC22. Interacts with PEP12. Interacts with self.

It is found in the golgi apparatus membrane. Functionally, involved in transport from the ER to the Golgi apparatus as well as in intra-Golgi transport. It belongs to a super-family of proteins called t-SNAREs or soluble NSF (N-ethylmaleimide-sensitive factor) attachment protein receptor. Rescues alpha-factor maturation defects. The polypeptide is Golgi SNAP receptor complex member 1 (GOS1) (Saccharomyces cerevisiae (strain ATCC 204508 / S288c) (Baker's yeast)).